A 394-amino-acid chain; its full sequence is MAKAKFERTKPHVNIGTIGHVDHGKTSLTAAITIVLAKTGGAQATAYDQIDAAPEEKERGITISTAHVEYETKNRHYAHVDCPGHADYVKNMITGAAQMDGAILVVSAADGPMPQTREHILLAKQVGVPAMVVFLNKVDMVDDSDLLELVEMEVRELLSKYGFPGDEIPIIKGSALQALEGKPEGEKAINELMDAVDSYIPQPVRATDKPFLMPIEDVFSISGRSTVVTGRVESGIIKVGEEIEIVGLKDTQKTTCTGVEMFRKLLDEGQAGDNVGILLRGTKREEVERGQVLAKPGSIKPHDKFEAEVYVLSKEEGGRHTPFTNDYRPQFYFRTTDVTGTIKLPADKQMVMPGDNATFTVELIKPIAMQEGLKFSIREGGRTVGAGVVTKINN.

Residues 10-204 (KPHVNIGTIG…AVDSYIPQPV (195 aa)) enclose the tr-type G domain. The segment at 19–26 (GHVDHGKT) is G1. GTP is bound at residue 19–26 (GHVDHGKT). Residue T26 participates in Mg(2+) binding. Positions 60–64 (GITIS) are G2. The segment at 81–84 (DCPG) is G3. Residues 81 to 85 (DCPGH) and 136 to 139 (NKVD) each bind GTP. Residues 136–139 (NKVD) form a G4 region. The tract at residues 174–176 (SAL) is G5.

It belongs to the TRAFAC class translation factor GTPase superfamily. Classic translation factor GTPase family. EF-Tu/EF-1A subfamily. Monomer.

It localises to the cytoplasm. It carries out the reaction GTP + H2O = GDP + phosphate + H(+). Functionally, GTP hydrolase that promotes the GTP-dependent binding of aminoacyl-tRNA to the A-site of ribosomes during protein biosynthesis. The chain is Elongation factor Tu from Rickettsia parkeri.